Here is a 64-residue protein sequence, read N- to C-terminus: MSTFVIVFLLLTAVLCHAEPALDETARGCNRLNKKCNSDGDCCRYGERCISTGVNYYCKPDFGP.

Positions 1–18 (MSTFVIVFLLLTAVLCHA) are cleaved as a signal peptide. Residues 19 to 27 (EPALDETAR) constitute a propeptide that is removed on maturation. Cystine bridges form between Cys-29–Cys-43, Cys-36–Cys-49, and Cys-42–Cys-58.

This sequence belongs to the scorpion calcin-like family. In terms of tissue distribution, expressed by the venom gland.

It localises to the secreted. May increase intracellular calcium release through the activation of nuclear inositol 1,4,5-trisphosphate receptors (ITPR) of cardiomyocytes, thereby causing an increase in the contraction frequency of these cells. The sequence is that of Putative calcium channel toxin Tx758 from Buthus israelis (Israeli scorpion).